A 434-amino-acid chain; its full sequence is MKKNIIVLGAQWGDEGKGKVIDFLSKNINYVVRCQGGNNAGHTVVIKEEKTVLHLLPSSILNKNTINIISSGVVISPIDLVKEINMIEKKGISIKNRILISELCPLVLKYHVSMDVAREKNRKKKEIDSIGTTHRGIGPAYEDKIARRALRIHHLINKDKFKKKLKNIVEYYNFQLINYYKEQPVNHEKIFNELINKSKLLNNISIDIPSYLNSINKKNKSIIFEGAQGALLDIDYGTYPYVTSSNTTVGGIISSTGISPFSIKYILGIIKAYSTRVGNGPFPTEIFDETKNIILEKGKEFGSTTGRKRRIGWFDAVAVKRVIQINSFSGFCLTKIDVLDNIKEIKICTSYILPNGKILDNISNIDDWNKAKPIYKSMPGWLSKTKGVKNFKNLPILAKNYIKKLQSIIKIPIEIISTGSDRNDIIVLNKKLVE.

Residues 13-19 (GDEGKGK) and 41-43 (GHT) each bind GTP. D14 serves as the catalytic Proton acceptor. 2 residues coordinate Mg(2+): D14 and G41. Residues 14–17 (DEGK), 39–42 (NAGH), T133, R147, Q228, T243, and R307 each bind IMP. Residue H42 is the Proton donor of the active site. 303 to 309 (STTGRKR) serves as a coordination point for substrate. GTP contacts are provided by residues R309, 335 to 337 (KID), and 417 to 419 (STG).

It belongs to the adenylosuccinate synthetase family. Homodimer. The cofactor is Mg(2+).

The protein resides in the cytoplasm. The catalysed reaction is IMP + L-aspartate + GTP = N(6)-(1,2-dicarboxyethyl)-AMP + GDP + phosphate + 2 H(+). Its pathway is purine metabolism; AMP biosynthesis via de novo pathway; AMP from IMP: step 1/2. Its function is as follows. Plays an important role in the de novo pathway of purine nucleotide biosynthesis. Catalyzes the first committed step in the biosynthesis of AMP from IMP. The polypeptide is Adenylosuccinate synthetase (Wigglesworthia glossinidia brevipalpis).